The following is a 380-amino-acid chain: Cytochrome b (380 aa).

The next 4 helical transmembrane spans lie at 34-54 (FGSL…LLAT), 78-99 (WLIR…YLHI), 114-134 (WNTG…GYVL), and 179-199 (FFAL…IHLT). Heme b is bound by residues histidine 84 and histidine 98. Histidine 183 and histidine 197 together coordinate heme b. Residue histidine 202 coordinates a ubiquinone. 4 helical membrane-spanning segments follow: residues 227-247 (LKDT…ALFS), 289-309 (LGGV…PLLH), 321-341 (FSQF…WVGS), and 348-368 (FIII…ILLP).

It belongs to the cytochrome b family. As to quaternary structure, the cytochrome bc1 complex contains 11 subunits: 3 respiratory subunits (MT-CYB, CYC1 and UQCRFS1), 2 core proteins (UQCRC1 and UQCRC2) and 6 low-molecular weight proteins (UQCRH/QCR6, UQCRB/QCR7, UQCRQ/QCR8, UQCR10/QCR9, UQCR11/QCR10 and a cleavage product of UQCRFS1). This cytochrome bc1 complex then forms a dimer. It depends on heme b as a cofactor.

The protein resides in the mitochondrion inner membrane. Its function is as follows. Component of the ubiquinol-cytochrome c reductase complex (complex III or cytochrome b-c1 complex) that is part of the mitochondrial respiratory chain. The b-c1 complex mediates electron transfer from ubiquinol to cytochrome c. Contributes to the generation of a proton gradient across the mitochondrial membrane that is then used for ATP synthesis. This chain is Cytochrome b (MT-CYB), found in Garrodia nereis (Grey-backed storm-petrel).